A 156-amino-acid polypeptide reads, in one-letter code: Large ribosomal subunit protein uL23 (156 aa).

Residues 1-19 are compositionally biased toward basic and acidic residues; the sequence is MAPKAKKEAPAPPKAEAKA. The segment at 1-67 is disordered; sequence MAPKAKKEAP…PKYPRKSAPR (67 aa). Residue A2 is modified to N,N,N-trimethylalanine. Residue K14 forms a Glycyl lysine isopeptide (Lys-Gly) (interchain with G-Cter in SUMO2) linkage. The segment covering 20 to 67 has biased composition (basic residues); it reads KALKAKKAVLKGVHSHKKKKIRTSPTFRRPKTLRLRRQPKYPRKSAPR. The beta-like import receptor binding (BIB) domain stretch occupies residues 32 to 74; that stretch reads VHSHKKKKIRTSPTFRRPKTLRLRRQPKYPRKSAPRRNKLDHY. The residue at position 41 (R41) is a Citrulline. At S43 the chain carries Phosphoserine. T45 carries the post-translational modification Phosphothreonine. K70 is subject to N6-acetyllysine.

Belongs to the universal ribosomal protein uL23 family. In terms of assembly, component of the large ribosomal subunit. Interacts with LYAR and GNL2. Interacts with MDM2; this interaction may promote MDM2-mediated p53/TP53 polyubiquitination. Directly interacts (via BIB domain) with IPO5, IPO7, KPNB1 and TNPO1; these interactions are involved in RPL23A nuclear import for the assembly of ribosomal subunits. Interacts with IPO8. In terms of processing, N-terminus is methylated by METTL11A/NTM1. Citrullinated by PADI4.

It is found in the cytoplasm. The protein localises to the nucleus. In terms of biological role, component of the large ribosomal subunit. The ribosome is a large ribonucleoprotein complex responsible for the synthesis of proteins in the cell. Binds a specific region on the 26S rRNA. May promote p53/TP53 degradation possibly through the stimulation of MDM2-mediated TP53 polyubiquitination. In Bos taurus (Bovine), this protein is Large ribosomal subunit protein uL23 (RPL23A).